The sequence spans 251 residues: Keratin-associated protein 10-10 (251 aa).

Repeat copies occupy residues Cys26 to Cys30, Cys31 to Ala35, Cys52 to Ala56, Cys84 to Ser88, Cys94 to Val98, Cys99 to Val103, Cys104 to Cys109, Cys126 to Ser130, Cys136 to Ser140, Cys146 to Val150, Cys168 to Ser172, Cys178 to Ser182, Cys183 to Ser187, Cys202 to Val206, and Cys220 to Ala224. Positions Cys26–Ala224 are 15 X 5 AA repeats of C-C-X(3).

Belongs to the KRTAP type 10 family. In terms of assembly, interacts with hair keratins. Restricted to a narrow region of the hair fiber cuticle, lying approximately 20 cell layers above the apex of the dermal papilla of the hair root; not detected in any other tissues.

In the hair cortex, hair keratin intermediate filaments are embedded in an interfilamentous matrix, consisting of hair keratin-associated proteins (KRTAP), which are essential for the formation of a rigid and resistant hair shaft through their extensive disulfide bond cross-linking with abundant cysteine residues of hair keratins. The matrix proteins include the high-sulfur and high-glycine-tyrosine keratins. The sequence is that of Keratin-associated protein 10-10 (KRTAP10-10) from Homo sapiens (Human).